Here is a 294-residue protein sequence, read N- to C-terminus: MLENLSTEHRNEKTMNLDEMSIKEVLQSMNEEDRTVALAVENEIEQIEKVVQTVIKSFEEEGRLIYIGAGTSGRLGILDAVECPPTFGTDDKMVQGFIAGGLKAFTKAVEGAEDREELAEEDLKSIGLNEKDTVIGIAASGRTPYVIGGLKYANSVGASTASISCNKNAEISKYAKLNVEVETGAEILTGSTRLKAGTAQKLVLNMISTASMIGVGKVYKNLMVDVQSTNEKLIERSKRIIVEATGVSYEVAAEHYEKAERNVKAAIVMVLLQCEYGEALEKLKEAKGFVKKAL.

The region spanning valine 54 to lysine 217 is the SIS domain. Glutamate 82 serves as the catalytic Proton donor. Glutamate 113 is an active-site residue.

The protein belongs to the GCKR-like family. MurNAc-6-P etherase subfamily. Homodimer.

The catalysed reaction is N-acetyl-D-muramate 6-phosphate + H2O = N-acetyl-D-glucosamine 6-phosphate + (R)-lactate. Its pathway is amino-sugar metabolism; N-acetylmuramate degradation. Specifically catalyzes the cleavage of the D-lactyl ether substituent of MurNAc 6-phosphate, producing GlcNAc 6-phosphate and D-lactate. This chain is N-acetylmuramic acid 6-phosphate etherase, found in Bacillus cereus (strain AH187).